The sequence spans 327 residues: Complex I intermediate-associated protein 30, mitochondrial (327 aa).

Residues 1–24 (MALVHKLLRGTYFLRKFSKPTSAL) constitute a mitochondrion transit peptide. Positions 42 to 63 (PVASPGKASSQRKTEGDLQGDH) are disordered. Over residues 53–63 (RKTEGDLQGDH) the composition is skewed to basic and acidic residues. Phosphoserine is present on serine 318.

Belongs to the CIA30 family. Part of the mitochondrial complex I assembly/MCIA complex that comprises at least the core subunits TMEM126B, NDUFAF1, ECSIT and ACAD9 and complement subunits such as COA1 and TMEM186. Interacts with ECSIT. Interacts with ACAD9. At early stages of complex I assembly, it is found in intermediate subcomplexes that contain different subunits including NDUFB6, NDUFA6, NDUFA9, NDUFS3, NDUFS7, ND1, ND2 and ND3. Interacts with TMEM70 and TMEM242. As to expression, ubiquitous.

It is found in the mitochondrion. Its subcellular location is the mitochondrion matrix. In terms of biological role, as part of the MCIA complex, involved in the assembly of the mitochondrial complex I. This chain is Complex I intermediate-associated protein 30, mitochondrial, found in Homo sapiens (Human).